A 479-amino-acid polypeptide reads, in one-letter code: Glutamyl-tRNA(Gln) amidotransferase subunit A (479 aa).

Catalysis depends on charge relay system residues Lys-71 and Ser-146. The active-site Acyl-ester intermediate is the Ser-170.

The protein belongs to the amidase family. GatA subfamily. As to quaternary structure, heterotrimer of A, B and C subunits.

It catalyses the reaction L-glutamyl-tRNA(Gln) + L-glutamine + ATP + H2O = L-glutaminyl-tRNA(Gln) + L-glutamate + ADP + phosphate + H(+). Its function is as follows. Allows the formation of correctly charged Gln-tRNA(Gln) through the transamidation of misacylated Glu-tRNA(Gln) in organisms which lack glutaminyl-tRNA synthetase. The reaction takes place in the presence of glutamine and ATP through an activated gamma-phospho-Glu-tRNA(Gln). This is Glutamyl-tRNA(Gln) amidotransferase subunit A from Lactobacillus johnsonii (strain CNCM I-12250 / La1 / NCC 533).